The following is a 245-amino-acid chain: Thymidylate kinase (245 aa).

Position 55-62 (55-62 (GIDGVGKS)) interacts with ATP.

This sequence belongs to the thymidylate kinase family.

The enzyme catalyses dTMP + ATP = dTDP + ADP. In terms of biological role, phosphorylation of dTMP to form dTDP in both de novo and salvage pathways of dTTP synthesis. This chain is Thymidylate kinase, found in Rhodopirellula baltica (strain DSM 10527 / NCIMB 13988 / SH1).